A 349-amino-acid polypeptide reads, in one-letter code: tRNA pseudouridine synthase D (349 aa).

Phe27 contributes to the substrate binding site. Asp80 functions as the Nucleophile in the catalytic mechanism. A substrate-binding site is contributed by Asn129. A TRUD domain is found at 155 to 303 (GVPNYFGAQR…VEAARRAMLL (149 aa)). Position 329 (Phe329) interacts with substrate.

Belongs to the pseudouridine synthase TruD family.

It catalyses the reaction uridine(13) in tRNA = pseudouridine(13) in tRNA. In terms of biological role, responsible for synthesis of pseudouridine from uracil-13 in transfer RNAs. This Escherichia coli O17:K52:H18 (strain UMN026 / ExPEC) protein is tRNA pseudouridine synthase D.